We begin with the raw amino-acid sequence, 354 residues long: Prephenate dehydrogenase (354 aa).

A Prephenate/arogenate dehydrogenase domain is found at 2 to 283 (KKILIIGLGL…AMEIHKGALP (282 aa)). An NAD(+)-binding site is contributed by 3-33 (KILIIGLGLIGSSIALGIKKAHPEFEILGSD). The region spanning 287 to 354 (DLFISVPDEK…IEKATDFTVV (68 aa)) is the ACT domain.

It belongs to the prephenate/arogenate dehydrogenase family.

It catalyses the reaction prephenate + NAD(+) = 3-(4-hydroxyphenyl)pyruvate + CO2 + NADH. It participates in amino-acid biosynthesis; L-tyrosine biosynthesis; (4-hydroxyphenyl)pyruvate from prephenate (NAD(+) route): step 1/1. This Lactococcus lactis subsp. cremoris (strain MG1363) protein is Prephenate dehydrogenase (tyrA).